Reading from the N-terminus, the 224-residue chain is Urease accessory protein UreF (224 aa).

The protein belongs to the UreF family. UreD, UreF and UreG form a complex that acts as a GTP-hydrolysis-dependent molecular chaperone, activating the urease apoprotein by helping to assemble the nickel containing metallocenter of UreC. The UreE protein probably delivers the nickel.

It is found in the cytoplasm. In terms of biological role, required for maturation of urease via the functional incorporation of the urease nickel metallocenter. The protein is Urease accessory protein UreF of Pseudomonas putida (strain ATCC 47054 / DSM 6125 / CFBP 8728 / NCIMB 11950 / KT2440).